We begin with the raw amino-acid sequence, 396 residues long: Elongation factor Tu (396 aa).

One can recognise a tr-type G domain in the interval 10-206 (KPHCNIGTIG…AVDAYIPQPE (197 aa)). Residues 19-26 (GHVDHGKT) form a G1 region. 19 to 26 (GHVDHGKT) is a GTP binding site. Thr-26 provides a ligand contact to Mg(2+). Positions 60–64 (GITIS) are G2. A G3 region spans residues 81-84 (DCPG). GTP contacts are provided by residues 81–85 (DCPGH) and 136–139 (NKVD). The segment at 136 to 139 (NKVD) is G4. A G5 region spans residues 174-176 (SAL).

This sequence belongs to the TRAFAC class translation factor GTPase superfamily. Classic translation factor GTPase family. EF-Tu/EF-1A subfamily. Monomer.

It localises to the cytoplasm. The enzyme catalyses GTP + H2O = GDP + phosphate + H(+). GTP hydrolase that promotes the GTP-dependent binding of aminoacyl-tRNA to the A-site of ribosomes during protein biosynthesis. This is Elongation factor Tu from Granulibacter bethesdensis (strain ATCC BAA-1260 / CGDNIH1).